We begin with the raw amino-acid sequence, 295 residues long: 4-diphosphocytidyl-2-C-methyl-D-erythritol kinase (295 aa).

The active site involves lysine 25. 108–118 (PMGSGLGGGSS) is a binding site for ATP. Residue aspartate 150 is part of the active site.

This sequence belongs to the GHMP kinase family. IspE subfamily.

The enzyme catalyses 4-CDP-2-C-methyl-D-erythritol + ATP = 4-CDP-2-C-methyl-D-erythritol 2-phosphate + ADP + H(+). The protein operates within isoprenoid biosynthesis; isopentenyl diphosphate biosynthesis via DXP pathway; isopentenyl diphosphate from 1-deoxy-D-xylulose 5-phosphate: step 3/6. In terms of biological role, catalyzes the phosphorylation of the position 2 hydroxy group of 4-diphosphocytidyl-2C-methyl-D-erythritol. The polypeptide is 4-diphosphocytidyl-2-C-methyl-D-erythritol kinase (Pasteurella multocida (strain Pm70)).